We begin with the raw amino-acid sequence, 95 residues long: Cytochrome b-c1 complex subunit 8, mitochondrial (95 aa).

Residues 57–74 traverse the membrane as a helical segment; that stretch reads FLYVAIPFVVVWSIWTRA.

It belongs to the UQCRQ/QCR8 family. In terms of assembly, component of the ubiquinol-cytochrome c oxidoreductase (cytochrome b-c1 complex, complex III, CIII), a multisubunit enzyme composed of 10 subunits. The complex is composed of 3 respiratory subunits cytochrome b (COB), cytochrome c1 (CYT1) and Rieske protein (RIP1), 2 core protein subunits COR1 and QCR2, and 5 low-molecular weight protein subunits QCR6, QCR7, QCR8, QCR9 and QCR10. The complex exists as an obligatory dimer and forms supercomplexes (SCs) in the inner mitochondrial membrane with a monomer or a dimer of cytochrome c oxidase (complex IV, CIV), resulting in 2 different assemblies (supercomplexes III(2)IV and III(2)IV(2)).

Its subcellular location is the membrane. The protein localises to the mitochondrion inner membrane. Component of the ubiquinol-cytochrome c oxidoreductase, a multisubunit transmembrane complex that is part of the mitochondrial electron transport chain which drives oxidative phosphorylation. The complex plays an important role in the uptake of multiple carbon sources present in different host niches. This Candida albicans (strain SC5314 / ATCC MYA-2876) (Yeast) protein is Cytochrome b-c1 complex subunit 8, mitochondrial.